A 245-amino-acid polypeptide reads, in one-letter code: NAD-dependent protein deacetylase (245 aa).

Positions 1–245 (MIFVQQFEEV…EFVEGLSSIK (245 aa)) constitute a Deacetylase sirtuin-type domain. Positions 26, 30, 37, 38, 105, 107, 108, and 123 each coordinate NAD(+). Phe-37 contributes to the nicotinamide binding site. Residues Ile-107 and Asp-108 each coordinate nicotinamide. His-123 functions as the Proton acceptor in the catalytic mechanism. Cys-131, Cys-134, Cys-151, and Cys-154 together coordinate Zn(2+). Residues Thr-190, Ser-191, Asn-216, and Ile-234 each contribute to the NAD(+) site.

The protein belongs to the sirtuin family. Class U subfamily. Zn(2+) is required as a cofactor.

The protein resides in the cytoplasm. It catalyses the reaction N(6)-acetyl-L-lysyl-[protein] + NAD(+) + H2O = 2''-O-acetyl-ADP-D-ribose + nicotinamide + L-lysyl-[protein]. NAD-dependent protein deacetylase which modulates the activities of several enzymes which are inactive in their acetylated form. The sequence is that of NAD-dependent protein deacetylase from Bacillus thuringiensis subsp. konkukian (strain 97-27).